Here is a 209-residue protein sequence, read N- to C-terminus: ATP-dependent Clp protease proteolytic subunit 2 (209 aa).

Ser-106 acts as the Nucleophile in catalysis. The active site involves His-131.

It belongs to the peptidase S14 family. In terms of assembly, fourteen ClpP subunits assemble into 2 heptameric rings which stack back to back to give a disk-like structure with a central cavity, resembling the structure of eukaryotic proteasomes.

The protein resides in the cytoplasm. The enzyme catalyses Hydrolysis of proteins to small peptides in the presence of ATP and magnesium. alpha-casein is the usual test substrate. In the absence of ATP, only oligopeptides shorter than five residues are hydrolyzed (such as succinyl-Leu-Tyr-|-NHMec, and Leu-Tyr-Leu-|-Tyr-Trp, in which cleavage of the -Tyr-|-Leu- and -Tyr-|-Trp bonds also occurs).. Its function is as follows. Cleaves peptides in various proteins in a process that requires ATP hydrolysis. Has a chymotrypsin-like activity. Plays a major role in the degradation of misfolded proteins. The sequence is that of ATP-dependent Clp protease proteolytic subunit 2 from Mesorhizobium japonicum (strain LMG 29417 / CECT 9101 / MAFF 303099) (Mesorhizobium loti (strain MAFF 303099)).